The primary structure comprises 469 residues: Neuraminidase (469 aa).

At 1 to 6 (MNPNQK) the chain is on the intravirion side. A helical membrane pass occupies residues 7 to 29 (IITIGSVSLTIATVCFLMQIAIL). The involved in apical transport and lipid raft association stretch occupies residues 11 to 33 (GSVSLTIATVCFLMQIAILATTV). The Virion surface portion of the chain corresponds to 30–469 (ATTVTLHFKQ…DGANINFMPI (440 aa)). Residues 36 to 88 (HFKQHECDSPASNQVMPCEPIIIERNITEIVYLNNTTIEKEICPEVVEYRNWS) form a hypervariable stalk region region. N-linked (GlcNAc...) asparagine; by host glycosylation is found at N61, N69, N70, and N86. Residues 91–469 (QCQITGFAPF…DGANINFMPI (379 aa)) are head of neuraminidase. Intrachain disulfides connect C92-C417, C124-C129, C183-C230, C232-C237, C278-C291, C280-C289, C318-C337, and C421-C447. R118 lines the substrate pocket. N-linked (GlcNAc...) asparagine; by host glycosylation occurs at N146. The active-site Proton donor/acceptor is D151. R152 lines the substrate pocket. Residues N200 and N234 are each glycosylated (N-linked (GlcNAc...) asparagine; by host). Substrate is bound at residue 276-277 (EE). A substrate-binding site is contributed by R292. Positions 293, 297, and 324 each coordinate Ca(2+). Residues 325–349 (TPRNDDSSSNSNCRDPNNERGNPGV) are disordered. Substrate is bound at residue R371. An N-linked (GlcNAc...) asparagine; by host glycan is attached at N402. Y406 acts as the Nucleophile in catalysis.

It belongs to the glycosyl hydrolase 34 family. In terms of assembly, homotetramer. Ca(2+) is required as a cofactor. Post-translationally, N-glycosylated.

It localises to the virion membrane. The protein resides in the host apical cell membrane. It catalyses the reaction Hydrolysis of alpha-(2-&gt;3)-, alpha-(2-&gt;6)-, alpha-(2-&gt;8)- glycosidic linkages of terminal sialic acid residues in oligosaccharides, glycoproteins, glycolipids, colominic acid and synthetic substrates.. Its activity is regulated as follows. Inhibited by the neuraminidase inhibitors zanamivir (Relenza) and oseltamivir (Tamiflu). These drugs interfere with the release of progeny virus from infected cells and are effective against all influenza strains. Resistance to neuraminidase inhibitors is quite rare. Functionally, catalyzes the removal of terminal sialic acid residues from viral and cellular glycoconjugates. Cleaves off the terminal sialic acids on the glycosylated HA during virus budding to facilitate virus release. Additionally helps virus spread through the circulation by further removing sialic acids from the cell surface. These cleavages prevent self-aggregation and ensure the efficient spread of the progeny virus from cell to cell. Otherwise, infection would be limited to one round of replication. Described as a receptor-destroying enzyme because it cleaves a terminal sialic acid from the cellular receptors. May facilitate viral invasion of the upper airways by cleaving the sialic acid moieties on the mucin of the airway epithelial cells. Likely to plays a role in the budding process through its association with lipid rafts during intracellular transport. May additionally display a raft-association independent effect on budding. Plays a role in the determination of host range restriction on replication and virulence. Sialidase activity in late endosome/lysosome traffic seems to enhance virus replication. In Aves (Human), this protein is Neuraminidase.